A 105-amino-acid polypeptide reads, in one-letter code: Photosystem II 5 kDa protein, chloroplastic (105 aa).

Residues Met1 to Ala77 constitute a chloroplast transit peptide.

The maturation of the PSII-T precursor to its final form occurs through a two step process. First, a stromal intermediate is formed, which, upon translocation into the thylakoid membrane, is processed to the mature protein.

The protein localises to the plastid. It is found in the chloroplast thylakoid membrane. In terms of biological role, may be a component of the oxygen-evolving complex. The protein is Photosystem II 5 kDa protein, chloroplastic (PSBT) of Gossypium hirsutum (Upland cotton).